The primary structure comprises 157 residues: Transcriptional repressor NrdR (157 aa).

Residues 3 to 34 (CPHCHQNSSRVIDSRPTDEGRVIRRRRECENC) fold into a zinc finger. One can recognise an ATP-cone domain in the interval 49–139 (LLVIKKNGTR…VYRQFKDMNV (91 aa)).

This sequence belongs to the NrdR family. Zn(2+) serves as cofactor.

Functionally, negatively regulates transcription of bacterial ribonucleotide reductase nrd genes and operons by binding to NrdR-boxes. This Latilactobacillus sakei subsp. sakei (strain 23K) (Lactobacillus sakei subsp. sakei) protein is Transcriptional repressor NrdR.